A 130-amino-acid chain; its full sequence is Small ribosomal subunit protein uS9 (130 aa).

Belongs to the universal ribosomal protein uS9 family.

The polypeptide is Small ribosomal subunit protein uS9 (Shewanella amazonensis (strain ATCC BAA-1098 / SB2B)).